Here is a 675-residue protein sequence, read N- to C-terminus: Parasporal crystal protein Cry18Ba (675 aa).

Belongs to the delta endotoxin family.

Its function is as follows. Binds to the brush border membrane vesicles of scarab larvae and damages the gut wall somehow to allow the vegetative cells of P.popilliae to enter the hemolymph. The sequence is that of Parasporal crystal protein Cry18Ba (cry18Ba) from Paenibacillus popilliae (Bacillus popilliae).